We begin with the raw amino-acid sequence, 134 residues long: Large ribosomal subunit protein eL32 (134 aa).

It belongs to the eukaryotic ribosomal protein eL32 family.

The protein is Large ribosomal subunit protein eL32 (RpL32) of Drosophila acanthoptera (Fruit fly).